The chain runs to 60 residues: Arabinogalactan protein 14 (60 aa).

The N-terminal stretch at 1-28 (MEAMKMKLYVVVLVAVIAFSTVHQTVAA) is a signal peptide. Residues Pro-32, Pro-34, and Pro-36 each carry the 4-hydroxyproline modification. O-linked (Ara...) hydroxyproline glycans are attached at residues Pro-32, Pro-34, and Pro-36. Residue Ser-38 is the site of GPI-anchor amidated serine attachment. Residues 39–60 (DASSFIPTFFASVAVMAFGFFF) constitute a propeptide, removed in mature form.

Belongs to the AG-peptide AGP family. In terms of processing, contains 4-hydroxyproline; hydroxylated on Pro-32, Pro-34 and Pro-36. Post-translationally, O-glycosylated on hydroxyprolines; noncontiguous hydroxylproline residues are glycosylated with arabinogalactan.

The protein localises to the cell membrane. In terms of biological role, proteoglycan that seems to be implicated in diverse developmental roles such as differentiation, cell-cell recognition, embryogenesis and programmed cell death. Involved in the regulation of root hair elongation. The polypeptide is Arabinogalactan protein 14 (Arabidopsis thaliana (Mouse-ear cress)).